The sequence spans 89 residues: Acylphosphatase (89 aa).

The Acylphosphatase-like domain occupies 4 to 89 (SYIAHISGRV…WQEHHFFSIG (86 aa)). Catalysis depends on residues Arg-19 and Asn-37.

Belongs to the acylphosphatase family.

The catalysed reaction is an acyl phosphate + H2O = a carboxylate + phosphate + H(+). This chain is Acylphosphatase (acyP), found in Colwellia psychrerythraea (strain 34H / ATCC BAA-681) (Vibrio psychroerythus).